The chain runs to 227 residues: Holliday junction branch migration complex subunit RuvA (227 aa).

Positions 1 to 64 (MFESISGILT…EDALRLFGFS (64 aa)) are domain I. The tract at residues 65–143 (NVQERTLFLS…LTDAASCAQS (79 aa)) is domain II. Positions 144–158 (QTDDRAAHPSNLGCA) are flexible linker. Residues 159-227 (PHAREIEDLV…HPHAVAPAAE (69 aa)) form a domain III region.

The protein belongs to the RuvA family. In terms of assembly, homotetramer. Forms an RuvA(8)-RuvB(12)-Holliday junction (HJ) complex. HJ DNA is sandwiched between 2 RuvA tetramers; dsDNA enters through RuvA and exits via RuvB. An RuvB hexamer assembles on each DNA strand where it exits the tetramer. Each RuvB hexamer is contacted by two RuvA subunits (via domain III) on 2 adjacent RuvB subunits; this complex drives branch migration. In the full resolvosome a probable DNA-RuvA(4)-RuvB(12)-RuvC(2) complex forms which resolves the HJ.

It is found in the cytoplasm. Functionally, the RuvA-RuvB-RuvC complex processes Holliday junction (HJ) DNA during genetic recombination and DNA repair, while the RuvA-RuvB complex plays an important role in the rescue of blocked DNA replication forks via replication fork reversal (RFR). RuvA specifically binds to HJ cruciform DNA, conferring on it an open structure. The RuvB hexamer acts as an ATP-dependent pump, pulling dsDNA into and through the RuvAB complex. HJ branch migration allows RuvC to scan DNA until it finds its consensus sequence, where it cleaves and resolves the cruciform DNA. This Treponema pallidum (strain Nichols) protein is Holliday junction branch migration complex subunit RuvA.